A 257-amino-acid chain; its full sequence is Deoxyribose-phosphate aldolase (257 aa).

Asp-102 acts as the Proton donor/acceptor in catalysis. Lys-166 (schiff-base intermediate with acetaldehyde) is an active-site residue. Catalysis depends on Lys-198, which acts as the Proton donor/acceptor.

The protein belongs to the DeoC/FbaB aldolase family. DeoC type 2 subfamily.

The protein localises to the cytoplasm. It catalyses the reaction 2-deoxy-D-ribose 5-phosphate = D-glyceraldehyde 3-phosphate + acetaldehyde. It participates in carbohydrate degradation; 2-deoxy-D-ribose 1-phosphate degradation; D-glyceraldehyde 3-phosphate and acetaldehyde from 2-deoxy-alpha-D-ribose 1-phosphate: step 2/2. Its function is as follows. Catalyzes a reversible aldol reaction between acetaldehyde and D-glyceraldehyde 3-phosphate to generate 2-deoxy-D-ribose 5-phosphate. This Shewanella loihica (strain ATCC BAA-1088 / PV-4) protein is Deoxyribose-phosphate aldolase.